We begin with the raw amino-acid sequence, 248 residues long: uncharacterized protein (248 aa).

An ABC transporter domain is found at 7–246; that stretch reads VQLSNLSWTF…PASTILLPTS (240 aa). Residue 43-50 coordinates ATP; sequence GQSGSGKS.

It belongs to the ABC transporter superfamily.

This is an uncharacterized protein from Mycobacterium tuberculosis (strain CDC 1551 / Oshkosh).